Consider the following 89-residue polypeptide: UPF0147 protein Saci_0891 (89 aa).

This sequence belongs to the UPF0147 family.

The protein is UPF0147 protein Saci_0891 of Sulfolobus acidocaldarius (strain ATCC 33909 / DSM 639 / JCM 8929 / NBRC 15157 / NCIMB 11770).